We begin with the raw amino-acid sequence, 521 residues long: Non-specific phospholipase C5 (521 aa).

The span at 478-487 (SKKARERGGD) shows a compositional bias: basic and acidic residues. The disordered stretch occupies residues 478 to 521 (SKKARERGGDENDIVFCVDDDDDHNVVKPPPSQSEPSHATPWSN). Over residues 511–521 (SEPSHATPWSN) the composition is skewed to polar residues.

This sequence belongs to the bacterial phospholipase C family. In terms of tissue distribution, specifically expressed in flowers.

The protein resides in the cytoplasm. Its subcellular location is the cytosol. The enzyme catalyses a 1,2-diacyl-sn-glycero-3-phosphocholine + H2O = phosphocholine + a 1,2-diacyl-sn-glycerol + H(+). Functionally, non-specific phospholipase C (PLC) which assumes minor PLC activity during inorganic phosphate starvation. Can hydrolyze both phosphatidylcholine (PC) and phosphatidylethanolamine (PE). Required for normal accumulation of digalactosyldiacylglycerol (DGDG) during phosphate limitation and may contribute to the conversion of phospholipids to diacylglycerol, the substrate for galactolipid synthesis. This chain is Non-specific phospholipase C5 (NPC5), found in Arabidopsis thaliana (Mouse-ear cress).